A 617-amino-acid polypeptide reads, in one-letter code: MHRIGNAVRMASSSSANATITARHTQYSHAKTGGFSQTGPTLHNPYKDDPILDRTLRRLLPESEYMRVAADLSKFGDRITSEVEHLGRQAELEQPRLEHQDAWGKRVDKLIVCNEWHKLKQICAEEGVISIGYEDSVDPFVRRIHQVAKLFLFSPSAGLVSCPMAMTDGAVKTLTSLNLYGKHKLATEAVDRLRSRDPSKAWTSGQWMTEKKGGSDVAGGCDTYAVQIDKDTYRLHGYKWFSSAVDADVALTLARIVDSDGNALEGSRGLSLFLLKIRDESGNLNGIQMVRLKNKLGTKQLPTAELLLDGAIAERIGDQGRGVAGISNMLNITRIHNAVASLGYMRRIISLARDYSTKRVVFGQTQSKWPLHTTTLAKMEVDTRGSMLLLFEAARLLGLSEAGKSSDVEAMMLRLITPVLKLYAGKQAVPMVSEGIECFGGQGYMEDTGLPTLLRDAQVTPIWEGTTNVLSLDVLRVFSGKENILLAFGKRVEQLLGNTKTEDEKLKKSKEAVESALKQLQKLLVKASDSAIQGETRIDSVARHIAFTIARIYSGALLIDHASDSSVANQSDIEVAYRYCCEQPLIDLRWEWFASERVKADREIVFDNFTALEKSKI.

The segment at 1–47 (MHRIGNAVRMASSSSANATITARHTQYSHAKTGGFSQTGPTLHNPYK) is disordered. Low complexity predominate over residues 11–22 (ASSSSANATITA). Positions 23-41 (RHTQYSHAKTGGFSQTGPT) are enriched in polar residues. FAD is bound by residues 206–215 (QWMTEKKGGS) and 241–243 (FSS). S215 contributes to the substrate binding site. Substrate-binding residues include S267 and R334. Residues R359, 366–369 (QSKW), E437, G441, and 464–466 (EGT) each bind FAD.

This sequence belongs to the acyl-CoA dehydrogenase family. As to quaternary structure, homotetramer; dimer of dimers.

Promotes adaption to elevated temperatures by regulating expression of the lipid desaturase, fat-7. Binds selectively and with high affinity to fatty acids with chain lengths from C10 to C12 and prevents them from activating fat-7 expression mediated by the nuclear hormone receptor nhr-49, leading to low levels of membrane lipid desaturation and membrane fluidity for adaption to heat. The polypeptide is Acyl-CoA dehydrogenase family member 11 (Caenorhabditis elegans).